The chain runs to 391 residues: DNA replication and repair protein RecF (391 aa).

30–37 (GLNGQGKT) provides a ligand contact to ATP.

This sequence belongs to the RecF family.

It is found in the cytoplasm. Functionally, the RecF protein is involved in DNA metabolism; it is required for DNA replication and normal SOS inducibility. RecF binds preferentially to single-stranded, linear DNA. It also seems to bind ATP. In Kineococcus radiotolerans (strain ATCC BAA-149 / DSM 14245 / SRS30216), this protein is DNA replication and repair protein RecF.